Reading from the N-terminus, the 307-residue chain is Putative F-box protein PP2-B6 (307 aa).

One can recognise an F-box domain in the interval 42–88 (HSPFDDLPEDCISNIISFTSPRDVCVSASVSKSFAHAVQCDSIWEKF).

The sequence is that of Putative F-box protein PP2-B6 (PP2B6) from Arabidopsis thaliana (Mouse-ear cress).